A 216-amino-acid polypeptide reads, in one-letter code: 3-isopropylmalate dehydratase small subunit (216 aa).

It belongs to the LeuD family. LeuD type 1 subfamily. Heterodimer of LeuC and LeuD.

It catalyses the reaction (2R,3S)-3-isopropylmalate = (2S)-2-isopropylmalate. It participates in amino-acid biosynthesis; L-leucine biosynthesis; L-leucine from 3-methyl-2-oxobutanoate: step 2/4. Its function is as follows. Catalyzes the isomerization between 2-isopropylmalate and 3-isopropylmalate, via the formation of 2-isopropylmaleate. In Acinetobacter baylyi (strain ATCC 33305 / BD413 / ADP1), this protein is 3-isopropylmalate dehydratase small subunit.